Reading from the N-terminus, the 470-residue chain is Probable citrate synthase, mitochondrial (470 aa).

Catalysis depends on residues His-297, His-351, and Asp-406.

It belongs to the citrate synthase family. Homodimer.

Its subcellular location is the mitochondrion matrix. The catalysed reaction is oxaloacetate + acetyl-CoA + H2O = citrate + CoA + H(+). It participates in carbohydrate metabolism; tricarboxylic acid cycle; isocitrate from oxaloacetate: step 1/2. The protein is Probable citrate synthase, mitochondrial of Leishmania braziliensis.